Here is a 292-residue protein sequence, read N- to C-terminus: MTGNLRTFILMAALTALVMGMGGLIGGRGGAVIALAIAGAGNLFAWWNSDKMVLRQQGAHLVTRQQAPELVDMVAALAQRANLPMPKVYVLETEQPNAFATGRNPENAAVAVTQGIMRVLNRDELAGVIAHELAHIKHRDTLTMTVTATMAGAIAMLGNMLMFSSMFGGRDDNRGSGLAAILAMIFAPMAAGLVQMAISRTREYEADRMGAEICGRPMALAGALAKISRAAGQVVNIPAERNPASASMFIVNPLHALRMDRLFATHPPTEERIARLQAMASGAPASGPWGAR.

2 helical membrane-spanning segments follow: residues 7 to 27 (TFIL…LIGG) and 29 to 49 (GGAV…WWNS). Position 131 (His131) interacts with Zn(2+). Glu132 is an active-site residue. His135 is a Zn(2+) binding site. The next 2 membrane-spanning stretches (helical) occupy residues 148 to 168 (ATMA…SMFG) and 178 to 198 (LAAI…QMAI). Zn(2+) is bound at residue Glu203.

This sequence belongs to the peptidase M48B family. Zn(2+) is required as a cofactor.

It is found in the cell inner membrane. The sequence is that of Protease HtpX homolog from Paracoccus denitrificans (strain Pd 1222).